Here is a 116-residue protein sequence, read N- to C-terminus: Ribosome-binding factor A (116 aa).

The protein belongs to the RbfA family. As to quaternary structure, monomer. Binds 30S ribosomal subunits, but not 50S ribosomal subunits or 70S ribosomes.

The protein resides in the cytoplasm. Its function is as follows. One of several proteins that assist in the late maturation steps of the functional core of the 30S ribosomal subunit. Associates with free 30S ribosomal subunits (but not with 30S subunits that are part of 70S ribosomes or polysomes). Required for efficient processing of 16S rRNA. May interact with the 5'-terminal helix region of 16S rRNA. The chain is Ribosome-binding factor A from Enterococcus faecalis (strain ATCC 700802 / V583).